Here is a 611-residue protein sequence, read N- to C-terminus: uncharacterized protein (611 aa).

Residues 51 to 351 (LYGFIRLKIY…DYHKQGSRNL (301 aa)) enclose the SAC domain.

To yeast RSD1 and S.pombe SpBC19F5.03.

This is an uncharacterized protein from Schizosaccharomyces pombe (strain 972 / ATCC 24843) (Fission yeast).